The following is a 281-amino-acid chain: BEN domain-containing protein 6 (281 aa).

2 disordered regions span residues Val-15–Leu-62 and Ser-143–Lys-172. The stretch at Arg-19–Gln-99 forms a coiled coil. Residues Ser-143–Ser-160 show a composition bias toward low complexity. Basic and acidic residues predominate over residues Lys-162–Lys-172. The BEN domain maps to Glu-171–Lys-271.

In terms of assembly, interacts (via BEN domain) with RBPJ.

The protein resides in the nucleus. In terms of biological role, acts as a corepressor of recombining binding protein suppressor hairless (RBPJ) and inhibits Notch signaling in neural stem cells, thereby opposing their self-renewal and promoting neurogenesis. This is BEN domain-containing protein 6 (Bend6) from Mus musculus (Mouse).